The chain runs to 419 residues: UPF0761 membrane protein ACIAD3168 (419 aa).

Transmembrane regions (helical) follow at residues 42–62 (ALTY…LVII), 105–125 (LTVI…STIE), 148–168 (WTII…SSTV), 186–206 (AFIL…ILYW), 212–232 (TVPM…FELL), and 252–272 (AFAA…IVLL).

It belongs to the UPF0761 family.

It is found in the cell inner membrane. The protein is UPF0761 membrane protein ACIAD3168 of Acinetobacter baylyi (strain ATCC 33305 / BD413 / ADP1).